The primary structure comprises 166 residues: Large ribosomal subunit protein uL10 (166 aa).

The protein belongs to the universal ribosomal protein uL10 family. Part of the ribosomal stalk of the 50S ribosomal subunit. The N-terminus interacts with L11 and the large rRNA to form the base of the stalk. The C-terminus forms an elongated spine to which L12 dimers bind in a sequential fashion forming a multimeric L10(L12)X complex.

In terms of biological role, forms part of the ribosomal stalk, playing a central role in the interaction of the ribosome with GTP-bound translation factors. In Streptococcus pneumoniae serotype 19F (strain G54), this protein is Large ribosomal subunit protein uL10.